Here is a 201-residue protein sequence, read N- to C-terminus: Orotate phosphoribosyltransferase (201 aa).

5-phospho-alpha-D-ribose 1-diphosphate is bound at residue 113 to 121; it reads EDIITTGKS. T117 and R145 together coordinate orotate.

The protein belongs to the purine/pyrimidine phosphoribosyltransferase family. PyrE subfamily. In terms of assembly, homodimer. Mg(2+) is required as a cofactor.

The enzyme catalyses orotidine 5'-phosphate + diphosphate = orotate + 5-phospho-alpha-D-ribose 1-diphosphate. It functions in the pathway pyrimidine metabolism; UMP biosynthesis via de novo pathway; UMP from orotate: step 1/2. Functionally, catalyzes the transfer of a ribosyl phosphate group from 5-phosphoribose 1-diphosphate to orotate, leading to the formation of orotidine monophosphate (OMP). The protein is Orotate phosphoribosyltransferase of Helicobacter pylori (strain ATCC 700392 / 26695) (Campylobacter pylori).